The primary structure comprises 286 residues: 3-hydroxyanthranilate 3,4-dioxygenase (286 aa).

The tract at residues 1-160 (MERCVRVKSW…SEQYRTGKPN (160 aa)) is domain A (catalytic). R43 is an O2 binding site. Fe cation-binding residues include H47, E53, and H91. E53 lines the substrate pocket. The substrate site is built by R95 and E105. Residues 161–177 (PDQLLKEPPFPLSTRSV) form a linker region. Positions 178–286 (MEPMSLKAWL…QDPACKKPLG (109 aa)) are domain B.

It belongs to the 3-HAO family. In terms of assembly, monomer. Fe(2+) is required as a cofactor.

It localises to the cytoplasm. The protein resides in the cytosol. It carries out the reaction 3-hydroxyanthranilate + O2 = (2Z,4Z)-2-amino-3-carboxymuconate 6-semialdehyde. Its pathway is cofactor biosynthesis; NAD(+) biosynthesis; quinolinate from L-kynurenine: step 3/3. In terms of biological role, catalyzes the oxidative ring opening of 3-hydroxyanthranilate to 2-amino-3-carboxymuconate semialdehyde, which spontaneously cyclizes to quinolinate. In Rattus norvegicus (Rat), this protein is 3-hydroxyanthranilate 3,4-dioxygenase (Haao).